The sequence spans 53 residues: Large ribosomal subunit protein eL40 (53 aa).

The protein belongs to the eukaryotic ribosomal protein eL40 family.

This chain is Large ribosomal subunit protein eL40, found in Pyrobaculum arsenaticum (strain DSM 13514 / JCM 11321 / PZ6).